Reading from the N-terminus, the 37-residue chain is Large ribosomal subunit protein bL36B (37 aa).

Belongs to the bacterial ribosomal protein bL36 family.

This chain is Large ribosomal subunit protein bL36B, found in Kineococcus radiotolerans (strain ATCC BAA-149 / DSM 14245 / SRS30216).